We begin with the raw amino-acid sequence, 237 residues long: V-type proton ATPase subunit E3 (237 aa).

Met-1 is modified (N-acetylmethionine). Positions 9–67 (QIQQMVRFIRQEAEEKANEISISSEEEFNIEKLQLVEAEKKKIRQEYEKKEKQVDVRKK) form a coiled coil.

It belongs to the V-ATPase E subunit family. V-ATPase is a heteromultimeric enzyme composed of a peripheral catalytic V1 complex (components A to H) attached to an integral membrane V0 proton pore complex (components: a, c, c'', d and e).

It is found in the vacuole membrane. In terms of biological role, subunit of the peripheral V1 complex of vacuolar ATPase essential for assembly or catalytic function. V-ATPase is responsible for acidifying a variety of intracellular compartments in eukaryotic cells. The sequence is that of V-type proton ATPase subunit E3 (VHA-E3) from Arabidopsis thaliana (Mouse-ear cress).